Reading from the N-terminus, the 309-residue chain is Taste receptor type 2 member 8 (309 aa).

Residues Met-1 to Asn-7 lie on the Extracellular side of the membrane. A helical membrane pass occupies residues Ile-8–Ala-28. At Leu-29–Asn-50 the chain is on the cytoplasmic side. A helical membrane pass occupies residues Leu-51 to Leu-71. Over Asn-72–Gln-82 the chain is Extracellular. Residues Ile-83–Leu-103 form a helical membrane-spanning segment. At Asn-104–His-131 the chain is on the cytoplasmic side. A helical membrane pass occupies residues Trp-132–Leu-152. Over Ser-153–Thr-184 the chain is Extracellular. N-linked (GlcNAc...) asparagine glycosylation occurs at Asn-167. The helical transmembrane segment at Leu-185–Val-205 threads the bilayer. The Cytoplasmic segment spans residues Arg-206–Ser-239. Residues Phe-240–Met-260 form a helical membrane-spanning segment. At Thr-261–Ala-266 the chain is on the extracellular side. The helical transmembrane segment at Val-267–Val-287 threads the bilayer. Over Leu-288–Ile-309 the chain is Cytoplasmic.

The protein belongs to the G-protein coupled receptor T2R family.

Its subcellular location is the membrane. Its function is as follows. Receptor that may play a role in the perception of bitterness and is gustducin-linked. May play a role in sensing the chemical composition of the gastrointestinal content. The activity of this receptor may stimulate alpha gustducin, mediate PLC-beta-2 activation and lead to the gating of TRPM5. This is Taste receptor type 2 member 8 (TAS2R8) from Pan troglodytes (Chimpanzee).